The sequence spans 382 residues: SOX domain-containing protein dichaete (382 aa).

Disordered stretches follow at residues 53–142 (GGSP…EGHI) and 346–382 (YPSS…PVLY). Gly residues predominate over residues 60 to 69 (AGQGVNGSSG). Low complexity predominate over residues 96–123 (NSSIGSAGSLGSQSSLGSNGSGLNSSSG). A DNA-binding region (HMG box) is located at residues 142–210 (IKRPMNAFMV…LHMKEHPDYK (69 aa)). The segment covering 347-360 (PSSSTSSPGSSPGT) has biased composition (low complexity).

Initially expressed in a pair-rule-like pattern which is rapidly replaced by strong neuroectoderm expression.

It is found in the nucleus. Functionally, essential for segmentation and CNS development. May modulate the actions of other transcription factors, including gap and pair-rule proteins. This is SOX domain-containing protein dichaete (D) from Drosophila melanogaster (Fruit fly).